The sequence spans 143 residues: Transcriptional regulator MraZ (143 aa).

SpoVT-AbrB domains follow at residues 5-47 and 76-119; these read SHTP…PLAE and ASDD…DSQR.

This sequence belongs to the MraZ family. As to quaternary structure, forms oligomers.

The protein localises to the cytoplasm. It is found in the nucleoid. The chain is Transcriptional regulator MraZ from Parafrankia sp. (strain EAN1pec).